A 355-amino-acid chain; its full sequence is S-adenosylmethionine:tRNA ribosyltransferase-isomerase (355 aa).

It belongs to the QueA family. In terms of assembly, monomer.

It is found in the cytoplasm. It carries out the reaction 7-aminomethyl-7-carbaguanosine(34) in tRNA + S-adenosyl-L-methionine = epoxyqueuosine(34) in tRNA + adenine + L-methionine + 2 H(+). The protein operates within tRNA modification; tRNA-queuosine biosynthesis. In terms of biological role, transfers and isomerizes the ribose moiety from AdoMet to the 7-aminomethyl group of 7-deazaguanine (preQ1-tRNA) to give epoxyqueuosine (oQ-tRNA). The sequence is that of S-adenosylmethionine:tRNA ribosyltransferase-isomerase from Erwinia tasmaniensis (strain DSM 17950 / CFBP 7177 / CIP 109463 / NCPPB 4357 / Et1/99).